The sequence spans 749 residues: Serine/threonine-protein phosphatase 4 regulatory subunit 3 (749 aa).

In terms of assembly, regulatory subunit 3 (R3) of the histone H2A phosphatase complex (HTP-C) consisting of PPH3, PSY2 and PSY4.

The protein resides in the nucleus. Core regulatory subunit of the histone H2A phosphatase complex, which dephosphorylates H2AS128ph (gamma-H2A) that has been displaced from sites of DNA lesions in the double-stranded DNA break repair process. Dephosphorylation is necessary for efficient recovery from the DNA damage checkpoint. The sequence is that of Serine/threonine-protein phosphatase 4 regulatory subunit 3 (PSY2) from Kluyveromyces lactis (strain ATCC 8585 / CBS 2359 / DSM 70799 / NBRC 1267 / NRRL Y-1140 / WM37) (Yeast).